Consider the following 259-residue polypeptide: Ribonuclease HII (259 aa).

Residues valine 69–tyrosine 257 enclose the RNase H type-2 domain. The a divalent metal cation site is built by aspartate 75, glutamate 76, and aspartate 167.

The protein belongs to the RNase HII family. Mn(2+) serves as cofactor. Requires Mg(2+) as cofactor.

It localises to the cytoplasm. It catalyses the reaction Endonucleolytic cleavage to 5'-phosphomonoester.. In terms of biological role, endonuclease that specifically degrades the RNA of RNA-DNA hybrids. This Shouchella clausii (strain KSM-K16) (Alkalihalobacillus clausii) protein is Ribonuclease HII.